The primary structure comprises 122 residues: Small ribosomal subunit protein uS13 (122 aa).

The tract at residues 95 to 122 (SLPVRGQRTHTNARTRKGPAKSIAGKKK) is disordered.

The protein belongs to the universal ribosomal protein uS13 family. Part of the 30S ribosomal subunit. Forms a loose heterodimer with protein S19. Forms two bridges to the 50S subunit in the 70S ribosome.

Functionally, located at the top of the head of the 30S subunit, it contacts several helices of the 16S rRNA. In the 70S ribosome it contacts the 23S rRNA (bridge B1a) and protein L5 of the 50S subunit (bridge B1b), connecting the 2 subunits; these bridges are implicated in subunit movement. Contacts the tRNAs in the A and P-sites. This is Small ribosomal subunit protein uS13 from Mesorhizobium japonicum (strain LMG 29417 / CECT 9101 / MAFF 303099) (Mesorhizobium loti (strain MAFF 303099)).